The following is a 492-amino-acid chain: Ketol-acid reductoisomerase (NADP(+)) (492 aa).

The KARI N-terminal Rossmann domain occupies 15 to 208 (AQLGKCRFMA…GGHRAGVLES (194 aa)). NADP(+) contacts are provided by residues 45 to 48 (CGAQ), R68, R76, S78, and 108 to 110 (DKQ). Residue H132 is part of the active site. G158 contributes to the NADP(+) binding site. 2 consecutive KARI C-terminal knotted domains span residues 209–344 (SFVA…NAPQ) and 345–485 (FEGK…MTDM). Positions 217, 221, 389, and 393 each coordinate Mg(2+). A substrate-binding site is contributed by S414.

It belongs to the ketol-acid reductoisomerase family. Mg(2+) is required as a cofactor.

It catalyses the reaction (2R)-2,3-dihydroxy-3-methylbutanoate + NADP(+) = (2S)-2-acetolactate + NADPH + H(+). The enzyme catalyses (2R,3R)-2,3-dihydroxy-3-methylpentanoate + NADP(+) = (S)-2-ethyl-2-hydroxy-3-oxobutanoate + NADPH + H(+). It participates in amino-acid biosynthesis; L-isoleucine biosynthesis; L-isoleucine from 2-oxobutanoate: step 2/4. The protein operates within amino-acid biosynthesis; L-valine biosynthesis; L-valine from pyruvate: step 2/4. Functionally, involved in the biosynthesis of branched-chain amino acids (BCAA). Catalyzes an alkyl-migration followed by a ketol-acid reduction of (S)-2-acetolactate (S2AL) to yield (R)-2,3-dihydroxy-isovalerate. In the isomerase reaction, S2AL is rearranged via a Mg-dependent methyl migration to produce 3-hydroxy-3-methyl-2-ketobutyrate (HMKB). In the reductase reaction, this 2-ketoacid undergoes a metal-dependent reduction by NADPH to yield (R)-2,3-dihydroxy-isovalerate. The protein is Ketol-acid reductoisomerase (NADP(+)) of Yersinia enterocolitica serotype O:8 / biotype 1B (strain NCTC 13174 / 8081).